A 278-amino-acid polypeptide reads, in one-letter code: Tyrosine-protein phosphatase pmp1 (278 aa).

Residues 60 to 214 (GPVCIYPPNI…LSEYQQIIRK (155 aa)) form the Tyrosine-protein phosphatase domain. Residue cysteine 158 is the Phosphocysteine intermediate of the active site. The segment at 217–278 (SQGPYQSSSL…SSGSISNDAS (62 aa)) is disordered. The segment covering 252 to 278 (SPSTSESSMFTNLRRTRSSGSISNDAS) has biased composition (polar residues).

It belongs to the protein-tyrosine phosphatase family. Non-receptor class dual specificity subfamily.

It carries out the reaction O-phospho-L-tyrosyl-[protein] + H2O = L-tyrosyl-[protein] + phosphate. In terms of biological role, dual specificity phosphatase that dephosphorylates MAP kinase pmk1 on a Tyr. Has a role in chloride ion homeostasis by inactivating this pmk1 MAP kinase pathway. This chain is Tyrosine-protein phosphatase pmp1 (pmp1), found in Schizosaccharomyces pombe (strain 972 / ATCC 24843) (Fission yeast).